The chain runs to 128 residues: Fluoride-specific ion channel FluC (128 aa).

A run of 4 helical transmembrane segments spans residues 5 to 25 (LFIS…GLLF), 34 to 54 (FGAL…LGLF), 67 to 87 (FLIT…SEVV), and 99 to 119 (FCVL…GIWI). Na(+) contacts are provided by G74 and T77.

The protein belongs to the fluoride channel Fluc/FEX (TC 1.A.43) family.

The protein localises to the cell inner membrane. It catalyses the reaction fluoride(in) = fluoride(out). Its activity is regulated as follows. Na(+) is not transported, but it plays an essential structural role and its presence is essential for fluoride channel function. Fluoride-specific ion channel. Important for reducing fluoride concentration in the cell, thus reducing its toxicity. In Haemophilus influenzae (strain PittEE), this protein is Fluoride-specific ion channel FluC.